The sequence spans 304 residues: Homoserine kinase (304 aa).

Residue 90-100 (PLARGLGSSAS) coordinates ATP.

This sequence belongs to the GHMP kinase family. Homoserine kinase subfamily.

It is found in the cytoplasm. The enzyme catalyses L-homoserine + ATP = O-phospho-L-homoserine + ADP + H(+). Its pathway is amino-acid biosynthesis; L-threonine biosynthesis; L-threonine from L-aspartate: step 4/5. In terms of biological role, catalyzes the ATP-dependent phosphorylation of L-homoserine to L-homoserine phosphate. In Staphylococcus aureus (strain NCTC 8325 / PS 47), this protein is Homoserine kinase.